Consider the following 440-residue polypeptide: Thymidine phosphorylase (440 aa).

The protein belongs to the thymidine/pyrimidine-nucleoside phosphorylase family. In terms of assembly, homodimer.

The enzyme catalyses thymidine + phosphate = 2-deoxy-alpha-D-ribose 1-phosphate + thymine. Its pathway is pyrimidine metabolism; dTMP biosynthesis via salvage pathway; dTMP from thymine: step 1/2. Functionally, the enzymes which catalyze the reversible phosphorolysis of pyrimidine nucleosides are involved in the degradation of these compounds and in their utilization as carbon and energy sources, or in the rescue of pyrimidine bases for nucleotide synthesis. In Cronobacter sakazakii (strain ATCC BAA-894) (Enterobacter sakazakii), this protein is Thymidine phosphorylase.